We begin with the raw amino-acid sequence, 301 residues long: Helicase VP6-A (301 aa).

Disordered stretches follow at residues 1–99 (MIDW…TTGT) and 163–208 (RRKE…TSVG). Basic and acidic residues-rich tracts occupy residues 8–30 (ESGKGDKVEPKEENEAEESKDGE), 37–55 (GQKKESSKEAEDADVDRRV), and 67–81 (GFRERANENVDRGDG). Lysine 82 contacts ATP. 2 stretches are compositionally biased toward basic and acidic residues: residues 163-177 (RRKEKSETHARVAEK) and 186-202 (VHGDAQKESTEDEKTPE).

The protein belongs to the orbivirus VP6 family. Homohexamer.

The protein localises to the virion. The catalysed reaction is ATP + H2O = ADP + phosphate + H(+). Functionally, ATP dependent RNA helicase essential for RNA packaging and viral transcription. Possesses ss- and dsRNA-binding capacity. In Bluetongue virus 2 (isolate USA) (BTV 2), this protein is Helicase VP6-A (Segment-9).